A 158-amino-acid chain; its full sequence is Regulator of sigma D (158 aa).

The protein belongs to the Rsd/AlgQ family. As to quaternary structure, interacts with RpoD.

It is found in the cytoplasm. In terms of biological role, binds RpoD and negatively regulates RpoD-mediated transcription activation by preventing the interaction between the primary sigma factor RpoD with the catalytic core of the RNA polymerase and with promoter DNA. May be involved in replacement of the RNA polymerase sigma subunit from RpoD to RpoS during the transition from exponential growth to the stationary phase. This chain is Regulator of sigma D, found in Escherichia coli (strain UTI89 / UPEC).